The following is a 118-amino-acid chain: Putative membrane protein insertion efficiency factor (118 aa).

This sequence belongs to the UPF0161 family.

Its subcellular location is the cell inner membrane. Could be involved in insertion of integral membrane proteins into the membrane. This chain is Putative membrane protein insertion efficiency factor, found in Helicobacter pylori (strain P12).